We begin with the raw amino-acid sequence, 447 residues long: N-succinylarginine dihydrolase (447 aa).

Residues 19 to 28 (AGLSFGNEAS), Asn-110, and 137 to 138 (HR) contribute to the substrate site. Glu-174 is a catalytic residue. Position 212 (Arg-212) interacts with substrate. His-248 is an active-site residue. 2 residues coordinate substrate: Asp-250 and Asn-359. Cys-365 functions as the Nucleophile in the catalytic mechanism.

Belongs to the succinylarginine dihydrolase family. In terms of assembly, homodimer.

It catalyses the reaction N(2)-succinyl-L-arginine + 2 H2O + 2 H(+) = N(2)-succinyl-L-ornithine + 2 NH4(+) + CO2. It participates in amino-acid degradation; L-arginine degradation via AST pathway; L-glutamate and succinate from L-arginine: step 2/5. Catalyzes the hydrolysis of N(2)-succinylarginine into N(2)-succinylornithine, ammonia and CO(2). The protein is N-succinylarginine dihydrolase of Citrobacter koseri (strain ATCC BAA-895 / CDC 4225-83 / SGSC4696).